We begin with the raw amino-acid sequence, 65 residues long: Large ribosomal subunit protein bL32 (65 aa).

The protein belongs to the bacterial ribosomal protein bL32 family.

This is Large ribosomal subunit protein bL32 from Tropheryma whipplei (strain TW08/27) (Whipple's bacillus).